Reading from the N-terminus, the 1000-residue chain is Isoleucine--tRNA ligase, mitochondrial (1000 aa).

A mitochondrion-targeting transit peptide spans 1 to 27; sequence MLGAWRAAPRLRLRARFGVASVWARSA. A 'HIGH' region motif is present at residues 102–112; sequence PYANGDPHVGH. ATP contacts are provided by Lys-649 and Lys-652. The 'KMSKS' region motif lies at 649-653; the sequence is KMSKS.

Belongs to the class-I aminoacyl-tRNA synthetase family.

The protein localises to the mitochondrion matrix. The enzyme catalyses tRNA(Ile) + L-isoleucine + ATP = L-isoleucyl-tRNA(Ile) + AMP + diphosphate. Functionally, aminoacyl-tRNA synthetase that catalyzes the specific attachment of isoleucine to its cognate tRNA (tRNA(Ile)). This Gallus gallus (Chicken) protein is Isoleucine--tRNA ligase, mitochondrial (IARS2).